We begin with the raw amino-acid sequence, 202 residues long: Small ribosomal subunit protein uS5 (202 aa).

The 64-residue stretch at 42–105 (LKDEVLKIMP…ILAKLSIVPV (64 aa)) folds into the S5 DRBM domain. Thr-192 carries the phosphothreonine modification.

The protein belongs to the universal ribosomal protein uS5 family. In terms of assembly, component of the small ribosomal subunit. Interacts with zinc finger protein ZNF277 (via zinc-finger domains); the interaction is direct; the interaction is extra-ribosomal. Interaction with ZNF277 competes with the binding of RPS2 to protein arginine methyltransferase PRMT3. Citrullinated by PADI4 in the Arg/Gly-rich region. Post-translationally, asymmetric arginine dimethylation by PRMT3 occurs at multiple sites in the Arg/Gly-rich region. In terms of processing, monoubiquitinated by RNF10 when a ribosome has stalled during translation, leading to its degradation by the proteasome. Deubiquitinated by USP10, preventing degradation by the proteasome and promoting 40S ribosome subunit recycling following ribosome dissociation.

Its subcellular location is the cytoplasm. The protein localises to the nucleus. The protein resides in the nucleolus. Component of the ribosome, a large ribonucleoprotein complex responsible for the synthesis of proteins in the cell. The small ribosomal subunit (SSU) binds messenger RNAs (mRNAs) and translates the encoded message by selecting cognate aminoacyl-transfer RNA (tRNA) molecules. The large subunit (LSU) contains the ribosomal catalytic site termed the peptidyl transferase center (PTC), which catalyzes the formation of peptide bonds, thereby polymerizing the amino acids delivered by tRNAs into a polypeptide chain. The nascent polypeptides leave the ribosome through a tunnel in the LSU and interact with protein factors that function in enzymatic processing, targeting, and the membrane insertion of nascent chains at the exit of the ribosomal tunnel. Plays a role in the assembly and function of the 40S ribosomal subunit. Mutations in this protein affects the control of translational fidelity. Involved in nucleolar processing of pre-18S ribosomal RNA and ribosome assembly. This Cricetulus griseus (Chinese hamster) protein is Small ribosomal subunit protein uS5 (RPS2).